Consider the following 126-residue polypeptide: MTATVNTSDALARLAAVIESRLPARGGDPDKSYVARLLHKGPDAFLKKIGEEATEVVMAAKDADHGGDRTKIVNEVADLWFHTMVALAHYGFSPGEVIAELERREGTSGIEEKALRKAQAREASND.

It belongs to the PRA-PH family.

The protein resides in the cytoplasm. It catalyses the reaction 1-(5-phospho-beta-D-ribosyl)-ATP + H2O = 1-(5-phospho-beta-D-ribosyl)-5'-AMP + diphosphate + H(+). Its pathway is amino-acid biosynthesis; L-histidine biosynthesis; L-histidine from 5-phospho-alpha-D-ribose 1-diphosphate: step 2/9. This is Phosphoribosyl-ATP pyrophosphatase from Variovorax paradoxus (strain S110).